We begin with the raw amino-acid sequence, 671 residues long: DNA ligase (671 aa).

NAD(+) contacts are provided by residues 32-36, 81-82, and glutamate 113; these read DVEYD and SL. Lysine 115 (N6-AMP-lysine intermediate) is an active-site residue. Arginine 136, glutamate 173, lysine 290, and lysine 314 together coordinate NAD(+). Zn(2+) contacts are provided by cysteine 408, cysteine 411, cysteine 426, and cysteine 432. The BRCT domain maps to 593 to 671; the sequence is EIDSPFAGKT…EAEMLRLLGS (79 aa).

This sequence belongs to the NAD-dependent DNA ligase family. LigA subfamily. Mg(2+) serves as cofactor. It depends on Mn(2+) as a cofactor.

The catalysed reaction is NAD(+) + (deoxyribonucleotide)n-3'-hydroxyl + 5'-phospho-(deoxyribonucleotide)m = (deoxyribonucleotide)n+m + AMP + beta-nicotinamide D-nucleotide.. Functionally, DNA ligase that catalyzes the formation of phosphodiester linkages between 5'-phosphoryl and 3'-hydroxyl groups in double-stranded DNA using NAD as a coenzyme and as the energy source for the reaction. It is essential for DNA replication and repair of damaged DNA. The sequence is that of DNA ligase from Escherichia coli O17:K52:H18 (strain UMN026 / ExPEC).